We begin with the raw amino-acid sequence, 667 residues long: Transcription factor 4 (667 aa).

Positions 1–83 are essential for MYOD1 inhibition; sequence MHHQQRMAAL…GTPYDHMTSR (83 aa). A 9aaTAD motif is present at residues 18–26; that stretch reads DLLDFSAMF. 5 disordered regions span residues 24 to 245, 263 to 321, 336 to 379, 466 to 570, and 634 to 667; these read AMFS…LGNS, LSYP…SQTG, HTNN…EGPL, SLLP…MANN, and KRRE…MGQM. A compositionally biased stretch (polar residues) spans 29–49; the sequence is PVSSGKNGPTSLASGHFTGSN. Residues Ser-66, Ser-87, and Ser-92 each carry the phosphoserine modification. Polar residues-rich tracts occupy residues 107 to 126, 137 to 155, 205 to 216, and 266 to 306; these read GSYS…QQSL, GTLS…SSNN, KPATSTFPSSFF, and PSHS…TDSI. The span at 337–348 shows a compositional bias: low complexity; that stretch reads TNNSFSSNPSTP. Residues 365 to 374 are compositionally biased toward polar residues; it reads NGGQASSSPN. Ser-372 carries the post-translational modification Phosphoserine. The interval 379-400 is leucine-zipper; the sequence is LHSLQSRIEDRLERLDDAIHVL. 2 stretches are compositionally biased toward low complexity: residues 467 to 480 and 503 to 512; these read LLPN…LPVQ and GQSVSSGSSE. At Ser-515 the chain carries Phosphoserine. Basic and acidic residues-rich tracts occupy residues 527–542 and 555–570; these read KSSE…KDIK and PEQK…MANN. Positions 564–617 constitute a bHLH domain; it reads ERRMANNARERLRVRDINEAFKELGRMVQLHLKSDKPQTKLLILHQAVAVILSL. Residues 619-642 are class A specific domain; sequence QQVRERNLNPKAACLKRREEEKVS.

Efficient DNA binding requires dimerization with another bHLH protein. Forms homo- or heterooligomers with myogenin. Interacts with HIVEP2. Interacts with NEUROD2. Interacts with AGBL1. Interacts with BHLHA9. As to expression, expressed in adult heart, brain, placenta, skeletal muscle and to a lesser extent in the lung. In developing embryonic tissues, expression mostly occurs in the brain.

Its subcellular location is the nucleus. Its function is as follows. Transcription factor that binds to the immunoglobulin enhancer Mu-E5/KE5-motif. Involved in the initiation of neuronal differentiation. Activates transcription by binding to the E box (5'-CANNTG-3'). Binds to the E-box present in the somatostatin receptor 2 initiator element (SSTR2-INR) to activate transcription. Preferentially binds to either 5'-ACANNTGT-3' or 5'-CCANNTGG-3'. The sequence is that of Transcription factor 4 (TCF4) from Homo sapiens (Human).